A 258-amino-acid polypeptide reads, in one-letter code: Imidazole glycerol phosphate synthase subunit HisF (258 aa).

Catalysis depends on residues aspartate 11 and aspartate 130.

It belongs to the HisA/HisF family. In terms of assembly, heterodimer of HisH and HisF.

It localises to the cytoplasm. The catalysed reaction is 5-[(5-phospho-1-deoxy-D-ribulos-1-ylimino)methylamino]-1-(5-phospho-beta-D-ribosyl)imidazole-4-carboxamide + L-glutamine = D-erythro-1-(imidazol-4-yl)glycerol 3-phosphate + 5-amino-1-(5-phospho-beta-D-ribosyl)imidazole-4-carboxamide + L-glutamate + H(+). It functions in the pathway amino-acid biosynthesis; L-histidine biosynthesis; L-histidine from 5-phospho-alpha-D-ribose 1-diphosphate: step 5/9. In terms of biological role, IGPS catalyzes the conversion of PRFAR and glutamine to IGP, AICAR and glutamate. The HisF subunit catalyzes the cyclization activity that produces IGP and AICAR from PRFAR using the ammonia provided by the HisH subunit. In Sodalis glossinidius (strain morsitans), this protein is Imidazole glycerol phosphate synthase subunit HisF.